The chain runs to 273 residues: Ribosomal protein L11 methyltransferase (273 aa).

S-adenosyl-L-methionine is bound by residues Thr-112, Gly-133, Asp-155, and Asn-203.

This sequence belongs to the methyltransferase superfamily. PrmA family.

The protein localises to the cytoplasm. It catalyses the reaction L-lysyl-[protein] + 3 S-adenosyl-L-methionine = N(6),N(6),N(6)-trimethyl-L-lysyl-[protein] + 3 S-adenosyl-L-homocysteine + 3 H(+). Its function is as follows. Methylates ribosomal protein L11. The sequence is that of Ribosomal protein L11 methyltransferase from Deinococcus radiodurans (strain ATCC 13939 / DSM 20539 / JCM 16871 / CCUG 27074 / LMG 4051 / NBRC 15346 / NCIMB 9279 / VKM B-1422 / R1).